Here is a 137-residue protein sequence, read N- to C-terminus: uncharacterized protein (137 aa).

This is an uncharacterized protein from Saccharomyces cerevisiae (strain ATCC 204508 / S288c) (Baker's yeast).